The chain runs to 459 residues: Protein king tubby (459 aa).

The tract at residues 114–205 (HELEDEESSP…SNGAGGESEG (92 aa)) is disordered. Positions 123-155 (PVTVIEQQQTAPHSANSTHSQRPSTTRQPSFND) are enriched in polar residues. Serine 152 is modified (phosphoserine).

It belongs to the TUB family.

The protein resides in the cytoplasm. It localises to the nucleus. The protein localises to the cell projection. Its subcellular location is the cilium membrane. It is found in the rhabdomere. This is Protein king tubby from Drosophila persimilis (Fruit fly).